Consider the following 1302-residue polypeptide: Neuroglian (1302 aa).

Positions 1–23 (MWRQSTILAALLVALLCAGSAES) are cleaved as a signal peptide. The Extracellular portion of the chain corresponds to 24–1138 (KGNRPPRITK…ANAGWFIGMM (1115 aa)). Ig-like C2-type domains lie at 29 to 133 (PRIT…AELN), 134 to 225 (AFKD…YKIG), 245 to 330 (PPVR…QSFS), 339 to 426 (PYFT…VYLN), 432 to 524 (PTIS…TRIT), and 521 to 610 (TRIT…ANLI). Intrachain disulfides connect Cys-59–Cys-111, Cys-155–Cys-212, Cys-268–Cys-317, and Cys-360–Cys-410. N-linked (GlcNAc...) asparagine glycosylation is found at Asn-182 and Asn-198. Asn-411 and Asn-448 each carry an N-linked (GlcNAc...) asparagine glycan. 5 Fibronectin type-III domains span residues 614 to 711 (VPNA…TQPD), 716 to 813 (NPDN…SGED), 818 to 915 (APTN…TPEG), 916 to 1017 (VPSP…LKDA), and 1021 to 1119 (APAT…TVEG). Cys-625 and Cys-706 are joined by a disulfide. N-linked (GlcNAc...) asparagine glycosylation is found at Asn-652 and Asn-683. N-linked (GlcNAc...) asparagine glycosylation is present at Asn-821. N-linked (GlcNAc...) asparagine glycosylation is present at Asn-1125. Residues 1139 to 1154 (LALAFIIILFIIICII) traverse the membrane as a helical segment. Residues 1155-1302 (RRNRGGKYDV…AAAGAVATYV (148 aa)) are Cytoplasmic-facing. Residues 1172 to 1182 (GRRDYPEEGGF) show a composition bias toward basic and acidic residues. 2 disordered regions span residues 1172 to 1223 (GRRD…GDTG) and 1236 to 1291 (VPGK…ASNG). Residues 1188–1203 (PLDNKSAGRQSVSSAN) are compositionally biased toward polar residues. Residues 1253–1275 (AAAHQAAPTAGGSGAAGSAAAAG) show a composition bias toward low complexity.

In terms of assembly, forms a complex with Nrx-IV/Nrx and Cont. Forms a complex composed of septate junction proteins Nrx-IV/Nrx, Tsf2/MTf, Cont and Nrg during late embryogenesis. Restricted to the surface of neurons and glia in the developing nervous system. In terms of tissue distribution, restricted to non-neuronal tissues.

Its subcellular location is the cell membrane. The protein resides in the cell junction. It localises to the septate junction. Its function is as follows. Essential for septate junctions. Septate junctions, which are the equivalent of vertebrate tight junctions, are characterized by regular arrays of transverse structures that span the intermembrane space and form a physical barrier to diffusion. Required for formation of the hemolymph-brain barrier (the insect blood-brain barrier). Vital for embryonic development. Involved in the targeting for degradation or recycling of certain septate junction components, including kune and bou/boudin, by regulating their endocytosis. In terms of biological role, may play a role in neural and glial cell adhesion in the developing embryo. May be a more general cell adhesion molecule involved in non-neuronal tissues and imaginal disk morphogenesis. The polypeptide is Neuroglian (Nrg) (Drosophila melanogaster (Fruit fly)).